A 174-amino-acid chain; its full sequence is Large ribosomal subunit protein uL18 (174 aa).

This sequence belongs to the universal ribosomal protein uL18 family. In terms of assembly, part of the 50S ribosomal subunit. Contacts the 5S and 23S rRNAs.

Its function is as follows. This is one of the proteins that bind and probably mediate the attachment of the 5S RNA into the large ribosomal subunit, where it forms part of the central protuberance. The polypeptide is Large ribosomal subunit protein uL18 (Methanosarcina mazei (strain ATCC BAA-159 / DSM 3647 / Goe1 / Go1 / JCM 11833 / OCM 88) (Methanosarcina frisia)).